The following is a 156-amino-acid chain: Transcription elongation factor GreA (156 aa).

Positions 6-75 form a coiled coil; the sequence is IYLTKEGYEK…ELENMLSKAE (70 aa).

The protein belongs to the GreA/GreB family.

Necessary for efficient RNA polymerase transcription elongation past template-encoded arresting sites. The arresting sites in DNA have the property of trapping a certain fraction of elongating RNA polymerases that pass through, resulting in locked ternary complexes. Cleavage of the nascent transcript by cleavage factors such as GreA or GreB allows the resumption of elongation from the new 3'terminus. GreA releases sequences of 2 to 3 nucleotides. The protein is Transcription elongation factor GreA of Thermosipho africanus (strain TCF52B).